The following is a 449-amino-acid chain: C4-dicarboxylate transport protein (449 aa).

The next 8 helical transmembrane spans lie at 18-38 (PFYLQLYFWVIIAIILGALLG), 61-81 (MIISPVIFLTIVTGIASVAHV), 93-113 (VYFLFFSTLALLLGLVVAHVV), 159-179 (FVGDNILQVLFVAVLFGIALA), 202-222 (LVQMLMKMAPIGAFGAIAFTI), 244-264 (SLLFVLVILGAVSWLCGFSIL), 346-366 (LFLVAMLSSKGAAGVSGAGFI), and 369-389 (AATLAVVPEVPIAGMALILGV).

Belongs to the dicarboxylate/amino acid:cation symporter (DAACS) (TC 2.A.23) family.

It is found in the cell inner membrane. Functionally, responsible for the transport of dicarboxylates such as succinate, fumarate, and malate from the periplasm across the membrane. This Xylella fastidiosa (strain M23) protein is C4-dicarboxylate transport protein.